A 287-amino-acid polypeptide reads, in one-letter code: CRISPR-associated endoribonuclease Cas6 1 (287 aa).

It belongs to the CRISPR-associated endoribonuclease Cas6 family. As to quaternary structure, part of the aCascade ribonucleoprotein complex, minimally composed of Csa2 and Cas5a, which binds crRNA. Other possible components of aCascade in strain P1 are Cas6b (SSO1437) and Csa5 (SSO1443), while SSO1399, Cas5b (SSO1400) and SSO1401 have sometimes been seen weakly associated. Csa2 is probably the major RNA-binding subunit. The Csa2-Cas5a-crRNA complex also binds target DNA homologous to crRNA, probably forming an R-loop. Purified aCascade forms a filament about 6 nm in width.

CRISPR (clustered regularly interspaced short palindromic repeat) is an adaptive immune system that provides protection against mobile genetic elements (viruses, transposable elements and conjugative plasmids). CRISPR clusters contain spacers, sequences complementary to antecedent mobile elements, and target invading nucleic acids. CRISPR clusters are transcribed and processed into CRISPR RNA (crRNA). The polypeptide is CRISPR-associated endoribonuclease Cas6 1 (cas6a) (Saccharolobus solfataricus (strain ATCC 35092 / DSM 1617 / JCM 11322 / P2) (Sulfolobus solfataricus)).